A 450-amino-acid chain; its full sequence is Deoxyguanosinetriphosphate triphosphohydrolase-like protein (450 aa).

Positions 61 to 274 (RLTHSLEVAQ…MELADDIAYA (214 aa)) constitute an HD domain.

Belongs to the dGTPase family. Type 2 subfamily.

This chain is Deoxyguanosinetriphosphate triphosphohydrolase-like protein, found in Histophilus somni (strain 2336) (Haemophilus somnus).